The chain runs to 316 residues: 1-aminocyclopropane-1-carboxylate oxidase 2 (316 aa).

The Fe2OG dioxygenase domain maps to 153 to 253 (PNFGTKVSNY…RMSLASFYNP (101 aa)). Fe cation is bound by residues histidine 177, aspartate 179, and histidine 234.

Belongs to the iron/ascorbate-dependent oxidoreductase family. Fe cation is required as a cofactor. Leaves.

The catalysed reaction is 1-aminocyclopropane-1-carboxylate + L-ascorbate + O2 = ethene + L-dehydroascorbate + hydrogen cyanide + CO2 + 2 H2O. It functions in the pathway alkene biosynthesis; ethylene biosynthesis via S-adenosyl-L-methionine; ethylene from S-adenosyl-L-methionine: step 2/2. This chain is 1-aminocyclopropane-1-carboxylate oxidase 2 (ACO2), found in Solanum lycopersicum (Tomato).